The sequence spans 367 residues: Glutamate 5-kinase (367 aa).

Position 10 (K10) interacts with ATP. Residues S50, D137, and N149 each contribute to the substrate site. ATP-binding positions include 169–170 and 211–217; these read TD and TGGMSTK. Residues 275–353 form the PUA domain; the sequence is AGEITVDEGA…QEIDAILGYE (79 aa).

It belongs to the glutamate 5-kinase family.

It is found in the cytoplasm. It catalyses the reaction L-glutamate + ATP = L-glutamyl 5-phosphate + ADP. The protein operates within amino-acid biosynthesis; L-proline biosynthesis; L-glutamate 5-semialdehyde from L-glutamate: step 1/2. Catalyzes the transfer of a phosphate group to glutamate to form L-glutamate 5-phosphate. The chain is Glutamate 5-kinase from Escherichia coli O81 (strain ED1a).